We begin with the raw amino-acid sequence, 417 residues long: Phosphoglycerate kinase 2 (417 aa).

Position 4 is a phosphoserine (Ser-4). Position 11 is an N6-acetyllysine (Lys-11). Positions 23, 24, 25, 26, 38, and 39 each coordinate (2R)-3-phosphoglycerate. Residue Lys-48 is modified to N6-acetyllysine. Positions 62, 63, 65, and 66 each coordinate (2R)-3-phosphoglycerate. Residues Lys-75, Lys-86, and Lys-97 each carry the N6-acetyllysine modification. Leu-122 and Arg-123 together coordinate (2R)-3-phosphoglycerate. 2 positions are modified to N6-acetyllysine: Lys-131 and Lys-146. Residues His-170 and Arg-171 each coordinate (2R)-3-phosphoglycerate. At Tyr-196 the chain carries Phosphotyrosine. The residue at position 199 (Lys-199) is an N6-acetyllysine. ADP is bound at residue Gly-214. Residue Gly-214 coordinates CDP. AMP-binding residues include Ala-215 and Lys-216. Ala-215 is an ATP binding site. Ala-215 is a Mg(2+) binding site. A CDP-binding site is contributed by Asp-219. Asp-219 contributes to the Mg(2+) binding site. Residue Lys-220 participates in AMP binding. Lys-220 serves as a coordination point for ATP. An ADP-binding site is contributed by Gly-238. Residue Gly-238 coordinates CDP. Position 239 (Gly-239) interacts with AMP. ATP is bound at residue Gly-239. Lys-267 and Lys-291 each carry N6-acetyllysine. Gly-313 serves as a coordination point for AMP. ATP is bound at residue Gly-313. Residues Gly-338, Ile-340, and Phe-343 each coordinate CDP. ADP is bound at residue Phe-343. An AMP-binding site is contributed by Glu-344. The ATP site is built by Glu-344, Asp-375, and Thr-376. Residue Asp-375 participates in Mg(2+) binding.

This sequence belongs to the phosphoglycerate kinase family. In terms of assembly, monomer. Mg(2+) is required as a cofactor. In terms of tissue distribution, testis and sperm. Localized on the principle piece in the sperm (at protein level). Testis-specific.

The protein localises to the cytoplasm. It catalyses the reaction (2R)-3-phosphoglycerate + ATP = (2R)-3-phospho-glyceroyl phosphate + ADP. The protein operates within carbohydrate degradation; glycolysis; pyruvate from D-glyceraldehyde 3-phosphate: step 2/5. In terms of biological role, essential for sperm motility and male fertility but is not required for the completion of spermatogenesis. The polypeptide is Phosphoglycerate kinase 2 (Pgk2) (Mus musculus (Mouse)).